The following is a 155-amino-acid chain: Ribosome maturation factor RimP (155 aa).

Belongs to the RimP family.

The protein localises to the cytoplasm. Its function is as follows. Required for maturation of 30S ribosomal subunits. The polypeptide is Ribosome maturation factor RimP (Listeria welshimeri serovar 6b (strain ATCC 35897 / DSM 20650 / CCUG 15529 / CIP 8149 / NCTC 11857 / SLCC 5334 / V8)).